The primary structure comprises 471 residues: Steroid C26-monooxygenase (471 aa).

Position 238 (Gly-238) interacts with substrate. Cys-412 serves as a coordination point for heme.

This sequence belongs to the cytochrome P450 family. It depends on heme as a cofactor.

The catalysed reaction is cholest-4-en-3-one + 6 reduced [2Fe-2S]-[ferredoxin] + 3 O2 + 5 H(+) = (25S)-3-oxocholest-4-en-26-oate + 6 oxidized [2Fe-2S]-[ferredoxin] + 4 H2O. Its function is as follows. Involved in the utilization of cholesterol as the sole carbon and energy source by degrading the side chain. Primarily catalyzes the sequential oxidation of the terminal methyl of cholest-4-en-3-one into (25S)-26-hydroxycholest-4-en-3-one (alcohol), (25S)-26-oxocholest-4-en-3-one (aldehyde), to finally yield the carboxylic acid (25S)-3-oxocholest-4-en-26-oate. Also able to sequentially oxidize cholesterol itself, not only cholest-4-en-3-one. The polypeptide is Steroid C26-monooxygenase (cyp125) (Rhodococcus jostii (strain RHA1)).